Here is a 272-residue protein sequence, read N- to C-terminus: Undecaprenyl-diphosphatase (272 aa).

A run of 8 helical transmembrane segments spans residues 4-24 (FEVI…FLPI), 43-63 (GGRV…CWLY), 86-106 (ISVL…VDFI), 109-129 (VLFS…IIFW), 145-165 (ITFK…IPGT), 186-206 (TEFS…FDLI), 222-242 (VGFV…VLFV), and 249-269 (VFAW…MFFN).

Belongs to the UppP family.

Its subcellular location is the cell inner membrane. It carries out the reaction di-trans,octa-cis-undecaprenyl diphosphate + H2O = di-trans,octa-cis-undecaprenyl phosphate + phosphate + H(+). Functionally, catalyzes the dephosphorylation of undecaprenyl diphosphate (UPP). Confers resistance to bacitracin. This is Undecaprenyl-diphosphatase from Acinetobacter baumannii (strain AB307-0294).